A 180-amino-acid chain; its full sequence is Crossover junction endodeoxyribonuclease RuvC (180 aa).

Residues aspartate 7, glutamate 66, and aspartate 138 contribute to the active site. Residues aspartate 7, glutamate 66, and aspartate 138 each coordinate Mg(2+).

This sequence belongs to the RuvC family. As to quaternary structure, homodimer which binds Holliday junction (HJ) DNA. The HJ becomes 2-fold symmetrical on binding to RuvC with unstacked arms; it has a different conformation from HJ DNA in complex with RuvA. In the full resolvosome a probable DNA-RuvA(4)-RuvB(12)-RuvC(2) complex forms which resolves the HJ. Mg(2+) is required as a cofactor.

The protein resides in the cytoplasm. It carries out the reaction Endonucleolytic cleavage at a junction such as a reciprocal single-stranded crossover between two homologous DNA duplexes (Holliday junction).. The RuvA-RuvB-RuvC complex processes Holliday junction (HJ) DNA during genetic recombination and DNA repair. Endonuclease that resolves HJ intermediates. Cleaves cruciform DNA by making single-stranded nicks across the HJ at symmetrical positions within the homologous arms, yielding a 5'-phosphate and a 3'-hydroxyl group; requires a central core of homology in the junction. The consensus cleavage sequence is 5'-(A/T)TT(C/G)-3'. Cleavage occurs on the 3'-side of the TT dinucleotide at the point of strand exchange. HJ branch migration catalyzed by RuvA-RuvB allows RuvC to scan DNA until it finds its consensus sequence, where it cleaves and resolves the cruciform DNA. The chain is Crossover junction endodeoxyribonuclease RuvC from Burkholderia pseudomallei (strain 668).